The chain runs to 640 residues: Autophagy-related protein 20 (640 aa).

2 stretches are compositionally biased toward polar residues: residues 1–18 (MSDL…SETR) and 126–153 (AETC…PSVS). Disordered regions lie at residues 1-63 (MSDL…NNKV) and 126-156 (AETC…SNRK). Residue S2 is modified to N-acetylserine. In terms of domain architecture, PX spans 140-301 (MNGETSASEE…DFLDPNNHNW (162 aa)). Residues R192, S194, K218, and R267 each coordinate a 1,2-diacyl-sn-glycero-3-phospho-(1D-myo-inositol-3-phosphate). A phosphoserine mark is found at S361 and S363. Coiled coils occupy residues 475–512 (LQNE…DNEM) and 562–593 (TASI…KVIK).

It belongs to the sorting nexin family. As to quaternary structure, forms a complex with SNX4 and ATG17.

It localises to the endosome membrane. It is found in the preautophagosomal structure membrane. Functionally, required for cytoplasm to vacuole transport (Cvt), pexophagy and mitophagy. Also involved in endoplasmic reticulum-specific autophagic process and is essential for the survival of cells subjected to severe ER stress. Functions in protein retrieval from the endocytic pathway. Required for proper sorting of the v-SNARE protein SNC1. This chain is Autophagy-related protein 20 (ATG20), found in Saccharomyces cerevisiae (strain ATCC 204508 / S288c) (Baker's yeast).